Here is a 365-residue protein sequence, read N- to C-terminus: tRNA/tmRNA (uracil-C(5))-methyltransferase (365 aa).

S-adenosyl-L-methionine is bound by residues Q189, Y217, N222, E238, and D298. The Nucleophile role is filled by C323. The active-site Proton acceptor is E357.

This sequence belongs to the class I-like SAM-binding methyltransferase superfamily. RNA M5U methyltransferase family. TrmA subfamily.

It catalyses the reaction uridine(54) in tRNA + S-adenosyl-L-methionine = 5-methyluridine(54) in tRNA + S-adenosyl-L-homocysteine + H(+). The catalysed reaction is uridine(341) in tmRNA + S-adenosyl-L-methionine = 5-methyluridine(341) in tmRNA + S-adenosyl-L-homocysteine + H(+). In terms of biological role, dual-specificity methyltransferase that catalyzes the formation of 5-methyluridine at position 54 (m5U54) in all tRNAs, and that of position 341 (m5U341) in tmRNA (transfer-mRNA). The polypeptide is tRNA/tmRNA (uracil-C(5))-methyltransferase (Shewanella loihica (strain ATCC BAA-1088 / PV-4)).